The chain runs to 212 residues: Interleukin-6 (212 aa).

The signal sequence occupies residues 1-29 (MTSFSTSAFRPVAFSLGLLLVMPAAFPAP). Cysteine 72 and cysteine 78 are disulfide-bonded. A glycan (N-linked (GlcNAc...) asparagine) is linked at asparagine 73. Residue serine 81 is modified to Phosphoserine. A disulfide bond links cysteine 101 and cysteine 111. 2 N-linked (GlcNAc...) asparagine glycosylation sites follow: asparagine 160 and asparagine 172.

It belongs to the IL-6 superfamily. In terms of assembly, component of a hexamer of two molecules each of IL6, IL6R and IL6ST; first binds to IL6R to associate with the signaling subunit IL6ST. Interacts with IL6R (via the N-terminal ectodomain); this interaction may be affected by IL6R-binding with SORL1, hence decreasing IL6 cis signaling. Interacts with SORL1 (via the N-terminal ectodomain); this interaction leads to IL6 internalization and lysosomal degradation. May form a trimeric complex with the soluble SORL1 ectodomain and soluble IL6R receptor; this interaction might stabilize circulating IL6, hence promoting IL6 trans signaling.

It localises to the secreted. Functionally, cytokine with a wide variety of biological functions in immunity, tissue regeneration, and metabolism. Binds to IL6R, then the complex associates to the signaling subunit IL6ST/gp130 to trigger the intracellular IL6-signaling pathway. The interaction with the membrane-bound IL6R and IL6ST stimulates 'classic signaling', whereas the binding of IL6 and soluble IL6R to IL6ST stimulates 'trans-signaling'. Alternatively, 'cluster signaling' occurs when membrane-bound IL6:IL6R complexes on transmitter cells activate IL6ST receptors on neighboring receiver cells. IL6 is a potent inducer of the acute phase response. Rapid production of IL6 contributes to host defense during infection and tissue injury, but excessive IL6 synthesis is involved in disease pathology. In the innate immune response, is synthesized by myeloid cells, such as macrophages and dendritic cells, upon recognition of pathogens through toll-like receptors (TLRs) at the site of infection or tissue injury. In the adaptive immune response, is required for the differentiation of B cells into immunoglobulin-secreting cells. Plays a major role in the differentiation of CD4(+) T cell subsets. Essential factor for the development of T follicular helper (Tfh) cells that are required for the induction of germinal-center formation. Required to drive naive CD4(+) T cells to the Th17 lineage. Also required for proliferation of myeloma cells and the survival of plasmablast cells. Its function is as follows. Acts as an essential factor in bone homeostasis and on vessels directly or indirectly by induction of VEGF, resulting in increased angiogenesis activity and vascular permeability. Induces, through 'trans-signaling' and synergistically with IL1B and TNF, the production of VEGF. Involved in metabolic controls, is discharged into the bloodstream after muscle contraction increasing lipolysis and improving insulin resistance. 'Trans-signaling' in central nervous system also regulates energy and glucose homeostasis. Mediates, through GLP-1, crosstalk between insulin-sensitive tissues, intestinal L cells and pancreatic islets to adapt to changes in insulin demand. Also acts as a myokine. Plays a protective role during liver injury, being required for maintenance of tissue regeneration. Also has a pivotal role in iron metabolism by regulating HAMP/hepcidin expression upon inflammation or bacterial infection. Through activation of IL6ST-YAP-NOTCH pathway, induces inflammation-induced epithelial regeneration. In Saimiri sciureus (Common squirrel monkey), this protein is Interleukin-6 (IL6).